Here is a 545-residue protein sequence, read N- to C-terminus: T-complex protein 1 subunit gamma (545 aa).

An N-acetylmethionine modification is found at Met1. Residues 1–24 (MMGHRPVLVLSQNTKRESGRKVQS) are disordered. A Phosphoserine modification is found at Ser11. Residue Lys15 forms a Glycyl lysine isopeptide (Lys-Gly) (interchain with G-Cter in SUMO2) linkage. Gly42 serves as a coordination point for ADP. Gly42 serves as a coordination point for ATP. Position 93 (Asp93) interacts with Mg(2+). Gly94, Thr95, Thr96, Ser97, Thr162, and Lys163 together coordinate ADP. ATP contacts are provided by Gly94, Thr95, and Thr96. Ser170 is subject to Phosphoserine. Residue Lys222 is modified to N6-acetyllysine. A phosphoserine mark is found at Ser243 and Ser244. Tyr247 bears the Phosphotyrosine mark. Residues Lys248 and Lys249 each participate in a glycyl lysine isopeptide (Lys-Gly) (interchain with G-Cter in SUMO2) cross-link. Ser252 carries the post-translational modification Phosphoserine. An intrachain disulfide couples Cys366 to Cys372. Lys381 participates in a covalent cross-link: Glycyl lysine isopeptide (Lys-Gly) (interchain with G-Cter in SUMO2). Residue Gly411 coordinates ADP. Residue Gly411 coordinates ATP. A phosphothreonine mark is found at Thr430 and Thr459. ADP is bound by residues Gly482, Glu483, Glu497, and Lys502. Gly482 is an ATP binding site. Residue Glu497 participates in ATP binding. The segment at 526 to 545 (HKKKGDDQNRQTGAPDAGQE) is disordered.

Belongs to the TCP-1 chaperonin family. As to quaternary structure, component of the chaperonin-containing T-complex (TRiC), a hexadecamer composed of two identical back-to-back stacked rings enclosing a protein folding chamber. Each ring is made up of eight different subunits: TCP1/CCT1, CCT2, CCT3, CCT4, CCT5, CCT6A/CCT6, CCT7, CCT8. Interacts with PACRG. Interacts with DNAAF4. Interacts with DLEC1.

Its subcellular location is the cytoplasm. The enzyme catalyses ATP + H2O = ADP + phosphate + H(+). In terms of biological role, component of the chaperonin-containing T-complex (TRiC), a molecular chaperone complex that assists the folding of actin, tubulin and other proteins upon ATP hydrolysis. The TRiC complex mediates the folding of WRAP53/TCAB1, thereby regulating telomere maintenance. As part of the TRiC complex may play a role in the assembly of BBSome, a complex involved in ciliogenesis regulating transports vesicles to the cilia. The protein is T-complex protein 1 subunit gamma (Cct3) of Rattus norvegicus (Rat).